The sequence spans 404 residues: NADH-quinone oxidoreductase subunit D 1 (404 aa).

Belongs to the complex I 49 kDa subunit family. As to quaternary structure, NDH-1 is composed of 14 different subunits. Subunits NuoB, C, D, E, F, and G constitute the peripheral sector of the complex.

It is found in the cell membrane. It carries out the reaction a quinone + NADH + 5 H(+)(in) = a quinol + NAD(+) + 4 H(+)(out). NDH-1 shuttles electrons from NADH, via FMN and iron-sulfur (Fe-S) centers, to quinones in the respiratory chain. The immediate electron acceptor for the enzyme in this species is believed to be a menaquinone. Couples the redox reaction to proton translocation (for every two electrons transferred, four hydrogen ions are translocated across the cytoplasmic membrane), and thus conserves the redox energy in a proton gradient. The polypeptide is NADH-quinone oxidoreductase subunit D 1 (Symbiobacterium thermophilum (strain DSM 24528 / JCM 14929 / IAM 14863 / T)).